We begin with the raw amino-acid sequence, 553 residues long: HTH-type transcriptional regulator SgrR (553 aa).

Residues 1–117 enclose the HTH marR-type domain; it reads MSTARLQQQF…LSQLGRSFRQ (117 aa). Residues 26–49 constitute a DNA-binding region (H-T-H motif); the sequence is LQELAEVLCCSRRHVRSLLGSMQQ. Residues 163 to 494 are solute-binding; the sequence is ELEPDLSHHW…EELHQDVELW (332 aa).

Functionally, activates the small RNA gene sgrS under glucose-phosphate stress conditions as well as yfdZ. Represses its own transcription under both stress and non-stress conditions. Might act as a sensor of the intracellular accumulation of phosphoglucose by binding these molecules in its C-terminal solute-binding domain. In Yersinia enterocolitica serotype O:8 / biotype 1B (strain NCTC 13174 / 8081), this protein is HTH-type transcriptional regulator SgrR.